The following is a 276-amino-acid chain: 3-keto-5-aminohexanoate cleavage enzyme (276 aa).

Residue glutamate 14 coordinates (5S)-5-amino-3-oxohexanoate. Zn(2+) is bound by residues histidine 46 and histidine 48. (5S)-5-amino-3-oxohexanoate is bound by residues serine 82, glycine 85, threonine 106, and asparagine 108. Glutamate 230 is a Zn(2+) binding site.

This sequence belongs to the BKACE family. Kce subfamily. As to quaternary structure, homotetramer. Requires Zn(2+) as cofactor.

It carries out the reaction (5S)-5-amino-3-oxohexanoate + acetyl-CoA = (3S)-3-aminobutanoyl-CoA + acetoacetate. The protein operates within amino-acid degradation; L-lysine degradation via acetate pathway. Functionally, involved in the anaerobic fermentation of lysine. Catalyzes the reversible reaction between 3-keto-5-aminohexanoate (KAH) and acetyl-CoA to form 3-aminobutyryl-CoA and acetoacetate. The reaction involves the deprotonation of KAH, the nucleophilic addition onto acetyl-CoA and the intramolecular transfer of the CoA moiety. The protein is 3-keto-5-aminohexanoate cleavage enzyme of Cloacimonas acidaminovorans (strain Evry).